Reading from the N-terminus, the 477-residue chain is Stromelysin-1 (477 aa).

Residues methionine 1–alanine 17 form the signal peptide. Residues tyrosine 18 to histidine 99 constitute a propeptide, activation peptide. Positions serine 90 to valine 97 match the Cysteine switch motif. A Zn(2+)-binding site is contributed by cysteine 92. N-linked (GlcNAc...) asparagine glycosylation is present at asparagine 120. Residues aspartate 124 and aspartate 158 each contribute to the Ca(2+) site. The Zn(2+) site is built by histidine 168 and aspartate 170. Residues aspartate 175, glycine 176, glycine 178, and valine 180 each coordinate Ca(2+). Histidine 183 serves as a coordination point for Zn(2+). Glycine 190, asparagine 192, and aspartate 194 together coordinate Ca(2+). Histidine 196 is a binding site for Zn(2+). Residues aspartate 198, aspartate 199, and glutamate 201 each contribute to the Ca(2+) site. Zn(2+) is bound at residue histidine 218. Glutamate 219 is a catalytic residue. Histidine 222 and histidine 228 together coordinate Zn(2+). The interval glutamine 260–glycine 285 is disordered. 4 Hemopexin repeats span residues leucine 287 to leucine 336, proline 337 to proline 383, valine 385 to isoleucine 433, and aspartate 434 to cysteine 477. The cysteines at positions 290 and 477 are disulfide-linked. Position 297 (aspartate 297) interacts with Ca(2+). Residues aspartate 389 and aspartate 438 each coordinate Ca(2+).

Belongs to the peptidase M10A family. It depends on Ca(2+) as a cofactor. Requires Zn(2+) as cofactor.

It is found in the secreted. The protein localises to the extracellular space. Its subcellular location is the extracellular matrix. The catalysed reaction is Preferential cleavage where P1', P2' and P3' are hydrophobic residues.. Its function is as follows. Metalloproteinase with a rather broad substrate specificity that can degrade fibronectin, laminin, gelatins of type I, III, IV, and V; collagens III, IV, X, and IX, and cartilage proteoglycans. Activates different molecules including growth factors, plasminogen or other matrix metalloproteinases such as MMP9. Once released into the extracellular matrix (ECM), the inactive pro-enzyme is activated by the plasmin cascade signaling pathway. Also acts intracellularly. For example, in dopaminergic neurons, gets activated by the serine protease HTRA2 upon stress and plays a pivotal role in DA neuronal degeneration by mediating microglial activation and alpha-synuclein/SNCA cleavage. In addition, plays a role in immune response and possesses antiviral activity against various viruses. Mechanistically, translocates from the cytoplasm into the cell nucleus upon virus infection to influence NF-kappa-B activities. This Equus caballus (Horse) protein is Stromelysin-1 (MMP3).